The sequence spans 415 residues: Putative competence-damage inducible protein (415 aa).

Belongs to the CinA family.

In Listeria innocua serovar 6a (strain ATCC BAA-680 / CLIP 11262), this protein is Putative competence-damage inducible protein.